The primary structure comprises 318 residues: Olfactory receptor 2A2 (318 aa).

The Extracellular segment spans residues 1–24; that stretch reads MEGNQTWITDITLLGFQVGPALAI. Asparagine 4 carries an N-linked (GlcNAc...) asparagine glycan. Residues 25 to 48 traverse the membrane as a helical segment; that stretch reads LLCGLFSVFYTLTLLGNGVIFGII. At 49 to 56 the chain is on the cytoplasmic side; it reads CLDSKLHT. The chain crosses the membrane as a helical span at residues 57–78; it reads PMYFFLSHLAIIDMSYASNNVP. Residues 79–99 are Extracellular-facing; that stretch reads KMLANLMNQKRTISFVPCIMQ. A helical transmembrane segment spans residues 100–119; it reads TFLYLAFAVTECLILVVMSY. Residues 120-138 lie on the Cytoplasmic side of the membrane; that stretch reads DRYVAICHPFQYTVIMSWR. The chain crosses the membrane as a helical span at residues 139–157; that stretch reads VCTILVLTSWSCGFALSLV. At 158-194 the chain is on the extracellular side; sequence HEILLLRLPFCGPRDVNHLFCEILSVLKLACADTWVN. Residues 195–218 form a helical membrane-spanning segment; that stretch reads QVVIFATCVFVLVGPLSLILVSYM. The Cytoplasmic portion of the chain corresponds to 219–235; it reads HILGAILKIQTKEGRIK. Residues 236–258 form a helical membrane-spanning segment; that stretch reads AFSTCSSHLCVVGLFFGIAMVVY. Residues 259 to 271 lie on the Extracellular side of the membrane; it reads MVPDSNQREEQEK. The chain crosses the membrane as a helical span at residues 272–291; it reads MLSLFHSVFNPMLNPLIYSL. Topologically, residues 292–310 are cytoplasmic; sequence RNAQLKGALHRALQRKRSM.

The protein belongs to the G-protein coupled receptor 1 family.

It localises to the cell membrane. Its function is as follows. Odorant receptor. This is Olfactory receptor 2A2 (OR2A2) from Homo sapiens (Human).